The sequence spans 428 residues: tRNA modification GTPase MnmE (428 aa).

Positions 20, 77, and 117 each coordinate (6S)-5-formyl-5,6,7,8-tetrahydrofolate. A TrmE-type G domain is found at 213 to 351; the sequence is GFEVAIIGPP…LVQRISDVLK (139 aa). Asn-223 provides a ligand contact to K(+). Residues 223-228, 242-248, and 267-270 contribute to the GTP site; these read NAGKST, SEVAGTT, and DTAG. Ser-227 serves as a coordination point for Mg(2+). K(+) is bound by residues Ser-242, Val-244, and Thr-247. A Mg(2+)-binding site is contributed by Thr-248. Lys-428 is a (6S)-5-formyl-5,6,7,8-tetrahydrofolate binding site.

Belongs to the TRAFAC class TrmE-Era-EngA-EngB-Septin-like GTPase superfamily. TrmE GTPase family. Homodimer. Heterotetramer of two MnmE and two MnmG subunits. Requires K(+) as cofactor.

It is found in the cytoplasm. Functionally, exhibits a very high intrinsic GTPase hydrolysis rate. Involved in the addition of a carboxymethylaminomethyl (cmnm) group at the wobble position (U34) of certain tRNAs, forming tRNA-cmnm(5)s(2)U34. The polypeptide is tRNA modification GTPase MnmE (Ruegeria pomeroyi (strain ATCC 700808 / DSM 15171 / DSS-3) (Silicibacter pomeroyi)).